The sequence spans 126 residues: Large ribosomal subunit protein uL14 (126 aa).

The protein belongs to the universal ribosomal protein uL14 family. As to quaternary structure, part of the 50S ribosomal subunit. Forms a cluster with proteins L3 and L19. In the 70S ribosome, L14 and L19 interact and together make contacts with the 16S rRNA in bridges B5 and B8.

Its function is as follows. Binds to 23S rRNA. Forms part of two intersubunit bridges in the 70S ribosome. This chain is Large ribosomal subunit protein uL14, found in Persephonella marina (strain DSM 14350 / EX-H1).